The sequence spans 103 residues: Preprofallaxidin-6 (103 aa).

A signal peptide spans 1–22 (MASLKKSLFLVLFLGFVSLSIC). The propeptide occupies 23–49 (EEEKRENEGNENEEEDENHEEGSEEKR). A disordered region spans residues 24 to 50 (EEKRENEGNENEEEDENHEEGSEEKRG). Residues 31–41 (GNENEEEDENH) are compositionally biased toward acidic residues. Leu65 is subject to Leucine amide. The disordered stretch occupies residues 67–103 (KRSEEKRYHPFGKRSEEKRYHPFGKRSEEKRYPPIGK). The propeptide occupies 69–73 (SEEKR). Phenylalanine amide is present on Phe77. The propeptide occupies 81 to 85 (SEEKR). At Phe89 the chain carries Phenylalanine amide. The propeptide occupies 93–97 (SEEKR). Isoleucine amide is present on Ile101.

This sequence belongs to the frog skin active peptide (FSAP) family. Brevinin subfamily. As to expression, expressed by the skin glands.

It localises to the secreted. In terms of biological role, fallaxidin-1.3 shows no antibacterial activity against Gram-positive or Gram-negative bacteria. Does not inhibit the formation of NO by neuronal nitric oxide synthase. Has no effect on splenocyte proliferation or smooth muscle contraction. Functionally, fallaxidin-1.4 shows no antibacterial activity against Gram-positive or Gram-negative bacteria. Does not inhibit the formation of NO by neuronal nitric oxide synthase. Has no effect on splenocyte proliferation or smooth muscle contraction. Fallaxidin-3.1 shows antibacterial activity against the Gram-positive bacteria E.faecalis (MIC=100 uM) and L.lactis (MIC=100 uM). No antibacterial activity against the Gram-positive bacteria B.cereus, L.innocua, M.luteus, S.epidermidis, S.uberis and S.aureus, or the Gram-negative bacteria E.cloacae and E.coli. The polypeptide is Preprofallaxidin-6 (Litoria fallax (Eastern dwarf tree frog)).